The sequence spans 216 residues: Transmembrane protein 125 (216 aa).

Helical transmembrane passes span 32–52 (LLCF…GVAL), 65–85 (LAVG…QLMS), 111–131 (AVVV…LAGL), and 144–164 (MLSV…GLLL).

It is found in the membrane. The sequence is that of Transmembrane protein 125 (Tmem125) from Mus musculus (Mouse).